We begin with the raw amino-acid sequence, 63 residues long: Large ribosomal subunit protein bL33 (63 aa).

This sequence belongs to the bacterial ribosomal protein bL33 family.

This Gloeobacter violaceus (strain ATCC 29082 / PCC 7421) protein is Large ribosomal subunit protein bL33.